Here is a 689-residue protein sequence, read N- to C-terminus: Elongation factor G (689 aa).

In terms of domain architecture, tr-type G spans 8–282; that stretch reads LNTRNIGIMA…AVVDYLPSPI (275 aa). GTP-binding positions include 17–24, 81–85, and 135–138; these read AHIDAGKT, DTPGH, and NKMD.

This sequence belongs to the TRAFAC class translation factor GTPase superfamily. Classic translation factor GTPase family. EF-G/EF-2 subfamily.

The protein localises to the cytoplasm. In terms of biological role, catalyzes the GTP-dependent ribosomal translocation step during translation elongation. During this step, the ribosome changes from the pre-translocational (PRE) to the post-translocational (POST) state as the newly formed A-site-bound peptidyl-tRNA and P-site-bound deacylated tRNA move to the P and E sites, respectively. Catalyzes the coordinated movement of the two tRNA molecules, the mRNA and conformational changes in the ribosome. The sequence is that of Elongation factor G from Mycoplasma capricolum subsp. capricolum (strain California kid / ATCC 27343 / NCTC 10154).